The primary structure comprises 347 residues: MGENMEREMLRPKTIAMDQNSASARSNPEREIKTGRLEPASNSAPTMAIDLQAVTMIYRDKTVVDSLSFGVRAGECFGLLGPNGAGKSTITRMLLGMATPSAGKISVLGLPVPGKARLARASIGVVSQFDNLDMEFTVRENLLVFGRYFQMSTRAIEKLIPSLLEFAQLEAKADVRVSDLSGGMKRRLTLARALVNDPQLLILDEPTTGLDPPARHQIWERLRSLLIRGKTILLTTHMMDEAERMCDRLCVLEGGRMIAEGPPLSLIEDIIGCPVIEVYGGNPDELSLIVRPHVDRIETSGETLFCYTVNSDQVRAKLREFPSLRLLERPANLEDVFLRLTGREMEK.

The span at 1–11 (MGENMEREMLR) shows a compositional bias: basic and acidic residues. Residues 1 to 32 (MGENMEREMLRPKTIAMDQNSASARSNPEREI) are disordered. Residues 17 to 26 (MDQNSASARS) are compositionally biased toward polar residues. The ABC transporter domain maps to 49-279 (IDLQAVTMIY…IIGCPVIEVY (231 aa)). 81–88 (GPNGAGKS) contacts ATP.

Belongs to the ABC transporter superfamily. Lipooligosaccharide exporter (TC 3.A.1.102) family. In terms of assembly, the complex is composed of two ATP-binding proteins (NodI) and two transmembrane proteins (NodJ).

It is found in the cell inner membrane. Its function is as follows. Part of the ABC transporter complex NodIJ involved in the export of the nodulation factors (Nod factors), the bacterial signal molecules that induce symbiosis and subsequent nodulation induction. Nod factors are LCO (lipo-chitin oligosaccharide), a modified beta-1,4-linked N-acetylglucosamine oligosaccharide. This subunit is responsible for energy coupling to the transport system. The polypeptide is Nod factor export ATP-binding protein I (Neorhizobium galegae (Rhizobium galegae)).